The primary structure comprises 489 residues: GTPase Der (489 aa).

2 EngA-type G domains span residues 3 to 166 and 201 to 374; these read PVVA…FDDV and IKLA…DSST. Residues 9-16, 56-60, 118-121, 207-214, 254-258, and 319-322 contribute to the GTP site; these read GRPNVGKS, DTGGI, NKTD, DTAGV, and NKWD. In terms of domain architecture, KH-like spans 375-459; that stretch reads KRISTSILTR…PIRIEFREGT (85 aa).

It belongs to the TRAFAC class TrmE-Era-EngA-EngB-Septin-like GTPase superfamily. EngA (Der) GTPase family. In terms of assembly, associates with the 50S ribosomal subunit.

In terms of biological role, GTPase that plays an essential role in the late steps of ribosome biogenesis. The protein is GTPase Der of Psychromonas ingrahamii (strain DSM 17664 / CCUG 51855 / 37).